Reading from the N-terminus, the 955-residue chain is Alpha-1,4 glucan phosphorylase L isozyme, chloroplastic/amyloplastic (955 aa).

The N-terminal 43 residues, 1–43 (MSRLSGITPRARDDRSQFQNPRLEIAVPDRTAGLQRTKRTLLV), are a transit peptide targeting the chloroplast. The segment at 522 to 550 (KVVTESEKDELEEKDTELEKDEDPVPAPI) is disordered. A compositionally biased stretch (acidic residues) spans 528-545 (EKDELEEKDTELEKDEDP). Position 801 is an N6-(pyridoxal phosphate)lysine (K801).

The protein belongs to the glycogen phosphorylase family. Requires pyridoxal 5'-phosphate as cofactor.

The protein localises to the plastid. Its subcellular location is the chloroplast. It localises to the amyloplast. It catalyses the reaction [(1-&gt;4)-alpha-D-glucosyl](n) + phosphate = [(1-&gt;4)-alpha-D-glucosyl](n-1) + alpha-D-glucose 1-phosphate. Phosphorylase is an important allosteric enzyme in carbohydrate metabolism. Enzymes from different sources differ in their regulatory mechanisms and in their natural substrates. However, all known phosphorylases share catalytic and structural properties. This chain is Alpha-1,4 glucan phosphorylase L isozyme, chloroplastic/amyloplastic, found in Ipomoea batatas (Sweet potato).